Here is a 486-residue protein sequence, read N- to C-terminus: CREB-regulated transcription coactivator 1 homolog (486 aa).

Positions 1-62 are disordered; it reads MSNSNTPRKF…APMPIPQQGL (62 aa). Residues 9 to 23 show a composition bias toward basic and acidic residues; the sequence is KFSEKIAILERKQNE. Over residues 34-52 the composition is skewed to polar residues; it reads QVQSITHHPTDSSGSSTAT. S76 carries the phosphoserine; by AMPK modification. Residues 103–166 are disordered; it reads PIQGHRSRSP…PPYNQPGQLV (64 aa). The segment covering 144–160 has biased composition (pro residues); sequence RTPPQHPQYTPYGPPYN. S179 is subject to Phosphoserine; by AMPK. 3 disordered regions span residues 214 to 278, 327 to 417, and 460 to 486; these read SMPG…QSPN, FNQD…SNSP, and APPQ…MLQN. Polar residues-rich tracts occupy residues 224-245, 387-402, and 461-475; these read PNSQ…QGSP, PESQ…QLDP, and PPQT…NNSF.

The protein belongs to the TORC family. In terms of assembly, interacts with crh-1. Post-translationally, phosphorylated by AMPK at Ser-76 and Ser-179. Dephosphorylated by tax-6, the catalytic subunit of calcineurin. Expressed throughout the intestine and in head and tail neurons. Expressed in octopaminergic RIC neurons.

The protein resides in the nucleus. It is found in the cytoplasm. Its subcellular location is the cytosol. In terms of biological role, transcriptional coactivator for crh-1, the homolog of vertebrate transcription factor CREB1. Regulates the transcription of metabolic genes and may have a role in mitochondrial dynamics and metabolism. Involved in modulation of lifespan. Through crh-1, counteracts the pro-lifespan-extension signals of AMPK both cell autonomously and, when expressed in neurons, at a systemic level, possibly using the catecholamine analog, octopamine, as a messenger. This Caenorhabditis elegans protein is CREB-regulated transcription coactivator 1 homolog.